The following is a 287-amino-acid chain: Large ribosomal subunit protein uL2 (287 aa).

Positions 214–287 (LGRRPEVRGS…SKRGRGGRDA (74 aa)) are disordered. The segment covering 271-287 (QRRRRKSSKRGRGGRDA) has biased composition (basic residues).

Belongs to the universal ribosomal protein uL2 family. As to quaternary structure, part of the 50S ribosomal subunit. Forms a bridge to the 30S subunit in the 70S ribosome.

In terms of biological role, one of the primary rRNA binding proteins. Required for association of the 30S and 50S subunits to form the 70S ribosome, for tRNA binding and peptide bond formation. It has been suggested to have peptidyltransferase activity; this is somewhat controversial. Makes several contacts with the 16S rRNA in the 70S ribosome. This is Large ribosomal subunit protein uL2 from Synechococcus elongatus (strain ATCC 33912 / PCC 7942 / FACHB-805) (Anacystis nidulans R2).